The primary structure comprises 363 residues: Ribonuclease P protein subunit p40 (363 aa).

As to quaternary structure, component of nuclear RNase P and RNase MRP ribonucleoproteins. RNase P consists of a catalytic RNA moiety and about 10 protein subunits; POP1, POP4, POP5, POP7, RPP14, RPP21, RPP25, RPP30, RPP38 and RPP40. Within the RNase P complex, POP1, POP7 and RPP25 form the 'finger' subcomplex, POP5, RPP14, RPP40 and homodimeric RPP30 form the 'palm' subcomplex, and RPP21, POP4 and RPP38 form the 'wrist' subcomplex. All subunits of the RNase P complex interact with the catalytic RNA. Several subunits of RNase P are also part of the RNase MRP complex. RNase MRP consists of a catalytic RNA moiety and about 8 protein subunits; POP1, POP7, RPP25, RPP30, RPP38, RPP40 and possibly also POP4 and POP5.

Its subcellular location is the nucleus. The protein localises to the nucleolus. Its function is as follows. Component of ribonuclease P, a ribonucleoprotein complex that generates mature tRNA molecules by cleaving their 5'-ends. Also a component of the MRP ribonuclease complex, which cleaves pre-rRNA sequences. The polypeptide is Ribonuclease P protein subunit p40 (RPP40) (Homo sapiens (Human)).